We begin with the raw amino-acid sequence, 236 residues long: MAVTISDVCAVVPAAGFGRRMQTECPKQYLSIGDKTILEHTVAALLANPRVTRVVIAISPGDARFAALPLANHPQITVVDGGTERADSVLAGIRAAGNVAWVLVHDAARPCLHPDDLARLLAISQTSTVGGILAAPVRDTMKRAEPGLNHIAHTVERVDLWHALTPQFFPRELLHDCLTRALNEGATITDEASALEYCGFHPELVEGRADNIKVTRPEDLQLAEFYLTRMTYQENA.

It belongs to the IspD/TarI cytidylyltransferase family. IspD subfamily. Homodimer.

The enzyme catalyses 2-C-methyl-D-erythritol 4-phosphate + CTP + H(+) = 4-CDP-2-C-methyl-D-erythritol + diphosphate. It participates in isoprenoid biosynthesis; isopentenyl diphosphate biosynthesis via DXP pathway; isopentenyl diphosphate from 1-deoxy-D-xylulose 5-phosphate: step 2/6. Its function is as follows. Catalyzes the formation of 4-diphosphocytidyl-2-C-methyl-D-erythritol from CTP and 2-C-methyl-D-erythritol 4-phosphate (MEP). This is 2-C-methyl-D-erythritol 4-phosphate cytidylyltransferase from Enterobacter sp. (strain 638).